We begin with the raw amino-acid sequence, 228 residues long: 5'-methylthioadenosine/S-adenosylhomocysteine nucleosidase (228 aa).

Glu11 (proton acceptor) is an active-site residue. Substrate contacts are provided by residues Gly77, Ile151, and Met172–Glu173. Asp196 acts as the Proton donor in catalysis.

It belongs to the PNP/UDP phosphorylase family. MtnN subfamily.

It catalyses the reaction S-adenosyl-L-homocysteine + H2O = S-(5-deoxy-D-ribos-5-yl)-L-homocysteine + adenine. It carries out the reaction S-methyl-5'-thioadenosine + H2O = 5-(methylsulfanyl)-D-ribose + adenine. The enzyme catalyses 5'-deoxyadenosine + H2O = 5-deoxy-D-ribose + adenine. It participates in amino-acid biosynthesis; L-methionine biosynthesis via salvage pathway; S-methyl-5-thio-alpha-D-ribose 1-phosphate from S-methyl-5'-thioadenosine (hydrolase route): step 1/2. Catalyzes the irreversible cleavage of the glycosidic bond in both 5'-methylthioadenosine (MTA) and S-adenosylhomocysteine (SAH/AdoHcy) to adenine and the corresponding thioribose, 5'-methylthioribose and S-ribosylhomocysteine, respectively. Also cleaves 5'-deoxyadenosine, a toxic by-product of radical S-adenosylmethionine (SAM) enzymes, into 5-deoxyribose and adenine. This chain is 5'-methylthioadenosine/S-adenosylhomocysteine nucleosidase, found in Staphylococcus aureus (strain JH1).